Reading from the N-terminus, the 97-residue chain is UPF0729 protein AAEL015238 (97 aa).

The segment at 69-97 (EVAASGSGSNGTATAVGSEGEAEETKKSQ) is disordered. The span at 74 to 83 (GSGSNGTATA) shows a compositional bias: polar residues.

The protein belongs to the UPF0729 family.

This chain is UPF0729 protein AAEL015238, found in Aedes aegypti (Yellowfever mosquito).